A 306-amino-acid chain; its full sequence is Pantothenate kinase (306 aa).

Gly91–Ser98 is a binding site for ATP.

This sequence belongs to the prokaryotic pantothenate kinase family.

The protein resides in the cytoplasm. The enzyme catalyses (R)-pantothenate + ATP = (R)-4'-phosphopantothenate + ADP + H(+). It functions in the pathway cofactor biosynthesis; coenzyme A biosynthesis; CoA from (R)-pantothenate: step 1/5. This Streptococcus equi subsp. zooepidemicus (strain MGCS10565) protein is Pantothenate kinase.